A 101-amino-acid polypeptide reads, in one-letter code: Apolipoprotein C-II (101 aa).

Residues 1-22 form the signal peptide; it reads MGTRLLPALFLVLLVLGFEVQG. Residues 23 to 38 are O-glycosylated at one site; the sequence is TQQPQQDEMPSPTFLT. The lipid binding stretch occupies residues 66–74; sequence AVDEKLRDL. Residues 78-101 are lipoprotein lipase cofactor; the sequence is STAAMSTYTGIFTDQVLSVLKGEE.

This sequence belongs to the apolipoprotein C2 family. Post-translationally, proapolipoprotein C-II is synthesized as a sialic acid containing glycoprotein which is subsequently desialylated prior to its proteolytic processing. Proapolipoprotein C-II, the major form found in plasma undergoes proteolytic cleavage of its N-terminal hexapeptide to generate apolipoprotein C-II, which occurs as the minor form in plasma. In terms of tissue distribution, liver and intestine.

It is found in the secreted. In terms of biological role, component of chylomicrons, very low-density lipoproteins (VLDL), low-density lipoproteins (LDL), and high-density lipoproteins (HDL) in plasma. Plays an important role in lipoprotein metabolism as an activator of lipoprotein lipase. Both proapolipoprotein C-II and apolipoprotein C-II can activate lipoprotein lipase. In normolipidemic individuals, it is mainly distributed in the HDL, whereas in hypertriglyceridemic individuals, predominantly found in the VLDL and LDL. The polypeptide is Apolipoprotein C-II (APOC2) (Homo sapiens (Human)).